We begin with the raw amino-acid sequence, 337 residues long: DnaJ homolog dnj-2 (337 aa).

A helical transmembrane segment spans residues 4–24 (AIAAPILFLLVSFFVQECESV). Residues 36 to 105 (NCYDVLEVNR…EAKTNYDYYL (70 aa)) enclose the J domain. 2 helical membrane-spanning segments follow: residues 127–147 (VDLR…QFLS) and 222–242 (LAWH…WTAL). Residues 293–323 (LKRNCATWKAERDAAEQEKMAQSGRYKRYKR) are a coiled coil.

Belongs to the DNAJC25 family.

It localises to the membrane. The protein is DnaJ homolog dnj-2 (dnj-2) of Caenorhabditis elegans.